We begin with the raw amino-acid sequence, 67 residues long: Large ribosomal subunit protein eL24 (67 aa).

4 residues coordinate Zn(2+): C7, C10, C33, and C37. The C4-type zinc finger occupies 7-37; that stretch reads CSYCGKEFEPGTGKMYVRNDGRVYFFCSRKC.

Belongs to the eukaryotic ribosomal protein eL24 family. As to quaternary structure, part of the 50S ribosomal subunit. Forms a cluster with proteins L3 and L14. Requires Zn(2+) as cofactor.

Functionally, binds to the 23S rRNA. This Thermococcus sibiricus (strain DSM 12597 / MM 739) protein is Large ribosomal subunit protein eL24.